Here is a 548-residue protein sequence, read N- to C-terminus: LDL receptor repeat-containing protein egg-2 (548 aa).

The Cytoplasmic segment spans residues 1 to 49 (MSQQAGNAQRGRFDEEPMSLGEKISHRMDQLKEIVSSSCPCAGKFPPVA). A helical; Signal-anchor for type II membrane protein transmembrane segment spans residues 50–70 (IVLIVALIILGVIIAVPLVIF). Residues 71-548 (LSPSAQAMSS…LALKNSGLRP (478 aa)) are Extracellular-facing. N-linked (GlcNAc...) asparagine glycosylation occurs at asparagine 119. LDL-receptor class A domains lie at 122-160 (TCSG…ENCK), 161-213 (ECQS…ASCR), 215-252 (KCSK…SNCN), 253-288 (KCQK…HQCD), 291-328 (TCSG…ENCP), 370-412 (KCDP…KKCT), 416-454 (ECVV…KGCD), and 455-492 (KCPS…HKCS). 23 cysteine pairs are disulfide-bonded: cysteine 130–cysteine 150, cysteine 144–cysteine 159, cysteine 162–cysteine 190, cysteine 168–cysteine 203, cysteine 197–cysteine 212, cysteine 216–cysteine 229, cysteine 223–cysteine 242, cysteine 236–cysteine 251, cysteine 254–cysteine 265, cysteine 261–cysteine 278, cysteine 272–cysteine 287, cysteine 292–cysteine 305, cysteine 300–cysteine 318, cysteine 312–cysteine 327, cysteine 371–cysteine 389, cysteine 379–cysteine 402, cysteine 396–cysteine 411, cysteine 417–cysteine 431, cysteine 427–cysteine 444, cysteine 438–cysteine 453, cysteine 456–cysteine 469, cysteine 463–cysteine 482, and cysteine 476–cysteine 491. Asparagine 244 is a glycosylation site (N-linked (GlcNAc...) asparagine). Asparagine 527 carries N-linked (GlcNAc...) asparagine glycosylation.

The protein resides in the cell membrane. The protein localises to the endosome membrane. Functionally, probable receptor which is required for the oocyte-to-zygote transition although its exact function is controversial. Redundantly with egg-1, seems to be required for fertilization probably by promoting the interaction or fusion between sperm and oocyte. Conversely, shown to be dispensable for fertilization but required together with egg-1 for the formation of a continuous and cohesive eggshell chitin layer by maintaining a homogenous distribution of chitin synthase chs-1 at the unfertilized oocyte cell membrane. Appears to recruit or maintain together to the unfertilized oocyte cortex several proteins including chs-1, kinase mbk-2 and pseudophosphatase egg-3, and possibly egg-4 and egg-5. This Caenorhabditis elegans protein is LDL receptor repeat-containing protein egg-2.